Consider the following 379-residue polypeptide: cAMP-dependent protein kinase type I-alpha regulatory subunit (379 aa).

Methionine 1 is subject to N-acetylmethionine. The interval methionine 1–valine 134 is dimerization and phosphorylation. Residues glutamine 63–arginine 93 are disordered. Positions arginine 94–isoleucine 98 match the Pseudophosphorylation motif motif. 3',5'-cyclic AMP-binding positions include leucine 135–serine 252, glutamate 200, arginine 209, isoleucine 253–valine 379, glutamate 324, and arginine 333.

It belongs to the cAMP-dependent kinase regulatory chain family. As to quaternary structure, the inactive holoenzyme is composed of two regulatory chains and two catalytic chains. Activation by cAMP releases the two active catalytic monomers and the regulatory dimer. Interacts with PRKACA and PRKACB. Interacts with PRRC1; resulting in PKA activation. The pseudophosphorylation site binds to the substrate-binding region of the catalytic chain, resulting in the inhibition of its activity.

It is found in the cell membrane. Its function is as follows. Regulatory subunit of the cAMP-dependent protein kinases involved in cAMP signaling in cells. This chain is cAMP-dependent protein kinase type I-alpha regulatory subunit (prkar1aa), found in Danio rerio (Zebrafish).